A 1030-amino-acid polypeptide reads, in one-letter code: F-box/WD repeat-containing protein 10 (1030 aa).

The 50-residue stretch at 280 to 329 (RDFIRDLPLHLSKYILRMLDKHSLNRCIFVSQHWATLAQQVKVDQSMHSF) folds into the F-box domain. WD repeat units follow at residues 466-505 (GHAG…CVRI), 508-547 (GHQG…KTFK), 549-584 (KDPI…LQKT), 587-624 (GHEG…ERCL), and 626-667 (AFKH…KVIK). The tract at residues 709-773 (KNKVKKSKDK…LSSDDMETPV (65 aa)) is disordered. Over residues 716-733 (KDKEEEREETSLGDEHSR) the composition is skewed to basic and acidic residues. Residues 734 to 749 (STIQGHSLKDSVSSKQ) are compositionally biased toward polar residues. Residues 963 to 992 (FMLMTVKEEKEFAEAKMKEYEASVSTKEVD) adopt a coiled-coil conformation.

Its function is as follows. Probable substrate-recognition component of a SCF (SKP1-CUL1-F-box protein)-type E3 ubiquitin ligase complex which mediates the ubiquitination and subsequent proteasomal degradation of target proteins. Overexpression is leading to degradation of CBX5 and CBX1. This is F-box/WD repeat-containing protein 10 (Fbxw10) from Mus musculus (Mouse).